Here is a 353-residue protein sequence, read N- to C-terminus: Putative glycosyltransferase TagX (353 aa).

Belongs to the glycosyltransferase 2 family.

The protein is Putative glycosyltransferase TagX (tagX) of Staphylococcus aureus (strain MRSA252).